The following is a 177-amino-acid chain: Ribosome rescue factor SmrB (177 aa).

The segment at 22–45 is disordered; that stretch reads SKKLRQDTIIHQPSKNFSEQQKQR. Polar residues predominate over residues 30–41; sequence IIHQPSKNFSEQ. The region spanning 98–173 is the Smr domain; sequence LDMHGMKQDE…GAGAILVLLS (76 aa).

This sequence belongs to the SmrB family. In terms of assembly, associates with collided ribosomes, but not with correctly translating polysomes.

Acts as a ribosome collision sensor. Detects stalled/collided disomes (pairs of ribosomes where the leading ribosome is stalled and a second ribosome has collided with it) and endonucleolytically cleaves mRNA at the 5' boundary of the stalled ribosome. Stalled/collided disomes form a new interface (primarily via the 30S subunits) that binds SmrB. Cleaved mRNA becomes available for tmRNA ligation, leading to ribosomal subunit dissociation and rescue of stalled ribosomes. The sequence is that of Ribosome rescue factor SmrB from Aliivibrio salmonicida (strain LFI1238) (Vibrio salmonicida (strain LFI1238)).